The sequence spans 69 residues: Iota-conotoxin LtIIIA (69 aa).

Residues 1 to 20 (MLKMGVLLFTFLVLFPLTTL) form the signal peptide. A propeptide spanning residues 21-52 (ELDTDRPVERHAAIKQDLKPQERRGIRLHAPR) is cleaved from the precursor. 2 positions are modified to 4-carboxyglutamate: glutamate 54 and glutamate 57. 3 disulfides stabilise this stretch: cysteine 55-cysteine 67, cysteine 56-cysteine 65, and cysteine 61-cysteine 68. Proline 58 is modified (4-hydroxyproline).

As to expression, expressed by the venom duct.

It is found in the secreted. In terms of biological role, iota-conotoxins bind to voltage-gated sodium channels and act as agonists by shifting the voltage-dependence of activation to more hyperpolarized levels. This toxin enhances tetrodotoxin-sensitive sodium current in rat dorsal root ganglion neurons. This is Iota-conotoxin LtIIIA from Conus litteratus (Lettered cone).